The primary structure comprises 267 residues: Small ribosomal subunit protein uS3 (267 aa).

Residues 43–111 (IRKAMSKDLE…QVQLNIFEVK (69 aa)) enclose the KH type-2 domain. The interval 216 to 267 (FEEQQAQQSNNRQGRRGDRRPRRGQRNAAPQQNAAAEAPAAAEAPAATETKE) is disordered. Residues 228 to 240 (QGRRGDRRPRRGQ) are compositionally biased toward basic residues. Positions 241-267 (RNAAPQQNAAAEAPAAAEAPAATETKE) are enriched in low complexity.

This sequence belongs to the universal ribosomal protein uS3 family. Part of the 30S ribosomal subunit. Forms a tight complex with proteins S10 and S14.

In terms of biological role, binds the lower part of the 30S subunit head. Binds mRNA in the 70S ribosome, positioning it for translation. The sequence is that of Small ribosomal subunit protein uS3 from Bifidobacterium adolescentis (strain ATCC 15703 / DSM 20083 / NCTC 11814 / E194a).